The following is a 285-amino-acid chain: 4-hydroxybenzoate octaprenyltransferase (285 aa).

Transmembrane regions (helical) follow at residues 33–53 (FLAA…LGVV), 93–113 (LILF…MNTL), 134–154 (ITYL…PMAY), 166–186 (WLLF…YAMV), 209–229 (LMIG…GIQL), 233–253 (SLYN…QWLI), and 265–285 (FLNN…SVLI).

It belongs to the UbiA prenyltransferase family. Requires Mg(2+) as cofactor.

It localises to the cell inner membrane. The enzyme catalyses all-trans-octaprenyl diphosphate + 4-hydroxybenzoate = 4-hydroxy-3-(all-trans-octaprenyl)benzoate + diphosphate. Its pathway is cofactor biosynthesis; ubiquinone biosynthesis. In terms of biological role, catalyzes the prenylation of para-hydroxybenzoate (PHB) with an all-trans polyprenyl group. Mediates the second step in the final reaction sequence of ubiquinone-8 (UQ-8) biosynthesis, which is the condensation of the polyisoprenoid side chain with PHB, generating the first membrane-bound Q intermediate 3-octaprenyl-4-hydroxybenzoate. This is 4-hydroxybenzoate octaprenyltransferase from Aliivibrio salmonicida (strain LFI1238) (Vibrio salmonicida (strain LFI1238)).